A 281-amino-acid chain; its full sequence is Pantothenate synthetase (281 aa).

30–37 (MGNLHAGH) is a binding site for ATP. Residue histidine 37 is the Proton donor of the active site. A (R)-pantoate-binding site is contributed by glutamine 61. Glutamine 61 is a binding site for beta-alanine. 149 to 152 (GRKD) provides a ligand contact to ATP. Residue glutamine 155 coordinates (R)-pantoate. ATP contacts are provided by residues valine 178 and 186-189 (MSSR).

Belongs to the pantothenate synthetase family. As to quaternary structure, homodimer.

Its subcellular location is the cytoplasm. The enzyme catalyses (R)-pantoate + beta-alanine + ATP = (R)-pantothenate + AMP + diphosphate + H(+). It functions in the pathway cofactor biosynthesis; (R)-pantothenate biosynthesis; (R)-pantothenate from (R)-pantoate and beta-alanine: step 1/1. In terms of biological role, catalyzes the condensation of pantoate with beta-alanine in an ATP-dependent reaction via a pantoyl-adenylate intermediate. The polypeptide is Pantothenate synthetase (Shewanella amazonensis (strain ATCC BAA-1098 / SB2B)).